The sequence spans 1505 residues: G patch domain-containing protein 8 (1505 aa).

Residues 40 to 86 (SDNIGHRLLQKHGWKLGQGLGKSLQGRTDPIPIVVKYDVMGMGRMEM) form the G-patch domain. A coiled-coil region spans residues 89–124 (DYAEDATERRRVLEVEKEDTEELRQKYKDYVDKEKA). The C2H2-type zinc-finger motif lies at 136–160 (FYCELCDKQYQKHQEFDNHINSYDH). Basic and acidic residues-rich tracts occupy residues 166-175 (LKDLKQREFA) and 182-206 (SRKD…RKQA). The disordered stretch occupies residues 166 to 244 (LKDLKQREFA…SSTNSGASAV (79 aa)). Over residues 223–233 (VDEDGGEEDKD) the composition is skewed to acidic residues. K311 participates in a covalent cross-link: Glycyl lysine isopeptide (Lys-Gly) (interchain with G-Cter in SUMO2). Composition is skewed to basic and acidic residues over residues 322–339 (HAEE…EKSS) and 421–436 (EGDH…ENRK). 2 disordered regions span residues 322 to 393 (HAEE…EPEY) and 419 to 537 (QMEG…FPVL). The span at 437–449 (SSSPKPQGCSKTA) shows a compositional bias: polar residues. K479 is modified (N6-acetyllysine). A Glycyl lysine isopeptide (Lys-Gly) (interchain with G-Cter in SUMO2) cross-link involves residue K573. Composition is skewed to basic and acidic residues over residues 575 to 612 (SRNK…KSQE) and 648 to 665 (SETE…EPSG). The segment at 575 to 1304 (SRNKDAKAKG…ESTDGTEDAS (730 aa)) is disordered. At S648 the chain carries Phosphoserine. Basic residues predominate over residues 666–687 (KSHRHKKKKKHKKSSKHKRKHK). Basic and acidic residues predominate over residues 688–702 (ADTEEKSSKAESGEK). A compositionally biased stretch (basic residues) spans 703-715 (SKKRKKRKRKKNK). Phosphoserine is present on residues S733, S735, and S753. Residues 745–767 (AQDDSQRRSLPAEEGNSGKKDDG) are compositionally biased toward basic and acidic residues. Positions 794-804 (ANTKHSSRSSH) are enriched in basic residues. Over residues 832–849 (SEEEEEEEEEEEEEDEDS) the composition is skewed to acidic residues. A compositionally biased stretch (basic residues) spans 856 to 871 (SRSRSGHRHSSHRSSR). The span at 872-900 (RSYSSSSDASSDQSCYSRQHSYSDDSYSD) shows a compositional bias: low complexity. Phosphoserine is present on residues S915 and S918. Over residues 923–932 (SKHRSKRHKY) the composition is skewed to basic residues. Phosphoserine occurs at positions 985, 1013, 1018, 1037, and 1039. Residues 1017-1031 (ESPEERRSGRRDFIR) show a composition bias toward basic and acidic residues. Residues 1050–1063 (GPGKKEDGRGDDSK) are compositionally biased toward basic and acidic residues. S1085 bears the Phosphoserine mark. 3 stretches are compositionally biased toward basic and acidic residues: residues 1097 to 1112 (LLEK…KPNV), 1163 to 1185 (KKCE…EEGS), and 1211 to 1220 (EEPKSEEATA). Residue K1109 forms a Glycyl lysine isopeptide (Lys-Gly) (interchain with G-Cter in SUMO2) linkage. S1179 bears the Phosphoserine mark.

In Mus musculus (Mouse), this protein is G patch domain-containing protein 8 (Gpatch8).